The chain runs to 138 residues: Holo-[acyl-carrier-protein] synthase (138 aa).

Mg(2+) is bound by residues Asp8 and Glu56.

It belongs to the P-Pant transferase superfamily. AcpS family. Mg(2+) serves as cofactor.

Its subcellular location is the cytoplasm. It carries out the reaction apo-[ACP] + CoA = holo-[ACP] + adenosine 3',5'-bisphosphate + H(+). In terms of biological role, transfers the 4'-phosphopantetheine moiety from coenzyme A to a Ser of acyl-carrier-protein. This Clostridium novyi (strain NT) protein is Holo-[acyl-carrier-protein] synthase.